The chain runs to 285 residues: Phosphatidylserine decarboxylase proenzyme (285 aa).

Catalysis depends on charge relay system; for autoendoproteolytic cleavage activity residues D89, H146, and S252. Catalysis depends on S252, which acts as the Schiff-base intermediate with substrate; via pyruvic acid; for decarboxylase activity. At S252 the chain carries Pyruvic acid (Ser); by autocatalysis.

The protein belongs to the phosphatidylserine decarboxylase family. PSD-B subfamily. Prokaryotic type I sub-subfamily. As to quaternary structure, heterodimer of a large membrane-associated beta subunit and a small pyruvoyl-containing alpha subunit. Pyruvate serves as cofactor. Is synthesized initially as an inactive proenzyme. Formation of the active enzyme involves a self-maturation process in which the active site pyruvoyl group is generated from an internal serine residue via an autocatalytic post-translational modification. Two non-identical subunits are generated from the proenzyme in this reaction, and the pyruvate is formed at the N-terminus of the alpha chain, which is derived from the carboxyl end of the proenzyme. The autoendoproteolytic cleavage occurs by a canonical serine protease mechanism, in which the side chain hydroxyl group of the serine supplies its oxygen atom to form the C-terminus of the beta chain, while the remainder of the serine residue undergoes an oxidative deamination to produce ammonia and the pyruvoyl prosthetic group on the alpha chain. During this reaction, the Ser that is part of the protease active site of the proenzyme becomes the pyruvoyl prosthetic group, which constitutes an essential element of the active site of the mature decarboxylase.

It localises to the cell membrane. The catalysed reaction is a 1,2-diacyl-sn-glycero-3-phospho-L-serine + H(+) = a 1,2-diacyl-sn-glycero-3-phosphoethanolamine + CO2. The protein operates within phospholipid metabolism; phosphatidylethanolamine biosynthesis; phosphatidylethanolamine from CDP-diacylglycerol: step 2/2. Functionally, catalyzes the formation of phosphatidylethanolamine (PtdEtn) from phosphatidylserine (PtdSer). The sequence is that of Phosphatidylserine decarboxylase proenzyme from Vibrio vulnificus (strain CMCP6).